A 268-amino-acid chain; its full sequence is Oxygen-evolving enhancer protein 2-1, chloroplastic (268 aa).

The N-terminal 82 residues, 1–82 (MASTQCFLHQ…IGSKVSPADA (82 aa)), are a transit peptide targeting the chloroplast.

This sequence belongs to the PsbP family.

The protein localises to the plastid. Its subcellular location is the chloroplast thylakoid membrane. In terms of biological role, may be involved in the regulation of photosystem II. This is Oxygen-evolving enhancer protein 2-1, chloroplastic (PSBP1) from Nicotiana tabacum (Common tobacco).